The following is a 259-amino-acid chain: Ribonuclease PH (259 aa).

Residues Arg88 and 126-128 (GTR) each bind phosphate.

It belongs to the RNase PH family. Homohexameric ring arranged as a trimer of dimers.

It carries out the reaction tRNA(n+1) + phosphate = tRNA(n) + a ribonucleoside 5'-diphosphate. Its function is as follows. Phosphorolytic 3'-5' exoribonuclease that plays an important role in tRNA 3'-end maturation. Removes nucleotide residues following the 3'-CCA terminus of tRNAs; can also add nucleotides to the ends of RNA molecules by using nucleoside diphosphates as substrates, but this may not be physiologically important. Probably plays a role in initiation of 16S rRNA degradation (leading to ribosome degradation) during starvation. This is Ribonuclease PH from Mycobacterium bovis (strain BCG / Pasteur 1173P2).